Reading from the N-terminus, the 535-residue chain is MQLHISPSLRHVTVVTGKGLREFIKVKVGSRRFSYQMVFYSLLFFTFLLRFVFVLSTVDTIDGDPSPCSSLACLGKRLKPKLLGRRVDSGNVPEAMYQVLEQPLSEQELKGRSDIPQTLQDFMSEVKRSKSDAREFAQKLKEMVTLMEQRTRTAKIQEYLYRHVASSSIPKQLHCLALKLANEHSINAAARLQLPEAELVPMLVDNNYFHFVLASDNILAASVVAKSLVQNALRPHKIVLHIITDRKTYFPMQAWFSLHPLSPAIIEVKALHHFDWLSKGKVPVLEAMEKDQRVRSQFRGGSSVIVANNKENPVVVAAKLQALSPKYNSLMNHIRIHLPELFPSLNKVVFLDDDIVIQTDLSPLWDIDMNGKVNGAVETCRGEDKFVMSKKFKSYLNFSNPTIAKNFNPEECAWAYGMNVFDLAAWRRTNISSTYYHWLDENLKSDLSLWQLGTLPPGLIAFHGHVQTIDPFWHMLGLGYQETTSYADAESAAVVHFNGRAKPWLDIAFPHLRPLWAKYLDSSDRFIKSCHIRAS.

The Cytoplasmic segment spans residues 1-37 (MQLHISPSLRHVTVVTGKGLREFIKVKVGSRRFSYQM). The helical; Signal-anchor for type II membrane protein transmembrane segment at 38–58 (VFYSLLFFTFLLRFVFVLSTV) threads the bilayer. The Lumenal portion of the chain corresponds to 59–535 (DTIDGDPSPC…FIKSCHIRAS (477 aa)). N-linked (GlcNAc...) asparagine glycans are attached at residues asparagine 397 and asparagine 430.

It belongs to the glycosyltransferase 8 family. In terms of tissue distribution, highly expressed in stems. Detected in roots, inflorescences, siliques, and leaves. Expressed in cells undergoing secondary wall thickening, including interfascicular fibers and primary and secondary xylem.

The protein resides in the golgi apparatus membrane. It functions in the pathway glycan metabolism; pectin biosynthesis. In terms of biological role, involved in pectin assembly and/or distribution, and in the synthesis of secondary wall glucuronoxylan. Probably involved in the synthesis of the glycosyl sequence at the glucuronoxylan reducing end. May be involved in synthesis of a complex glycan primer for xylan synthesis. This Arabidopsis thaliana (Mouse-ear cress) protein is Probable galacturonosyltransferase 12 (GAUT12).